Consider the following 233-residue polypeptide: Small ribosomal subunit protein uS3 (233 aa).

The KH type-2 domain occupies 39–107; the sequence is VRQYLNKELA…PAQINIAEVR (69 aa).

Belongs to the universal ribosomal protein uS3 family. As to quaternary structure, part of the 30S ribosomal subunit. Forms a tight complex with proteins S10 and S14.

Functionally, binds the lower part of the 30S subunit head. Binds mRNA in the 70S ribosome, positioning it for translation. The polypeptide is Small ribosomal subunit protein uS3 (Cronobacter sakazakii (strain ATCC BAA-894) (Enterobacter sakazakii)).